A 1553-amino-acid chain; its full sequence is Dual oxidase 1 (1553 aa).

A signal peptide spans 1–21 (MGFRLALAWTLLVGPWMPMGA). The Extracellular portion of the chain corresponds to 22 to 596 (RNSISWEVQR…YFKGSGFGFG (575 aa)). The interval 26–593 (SWEVQRFDGW…MRDYFKGSGF (568 aa)) is peroxidase-like; mediates peroxidase activity. N-linked (GlcNAc...) asparagine glycosylation is found at N94, N342, N354, and N534. A helical transmembrane segment spans residues 597–617 (VTIGTLCCFPLVSLLSAWIVA). The Cytoplasmic portion of the chain corresponds to 618–1046 (QLRRRNFKRL…KRFVENYRRH (429 aa)). 3 EF-hand domains span residues 815 to 850 (PQDMFVESMFSLADKDGNGYLSFREFLDILVVFMKG), 851 to 886 (SPEEKSRLMFRMYDFDGNGLISKDEFIRMLRSFIEI), and 895 to 930 (QLTEVVESMFREAGFQDKQELTWEDFHFMLRDHDSE). D828, D830, N832, Y834, E839, D864, D866, N868, and E875 together coordinate Ca(2+). Residues 956–1250 (YISQEKLCPS…GSFALIQLPR (295 aa)) form an interaction with TXNDC11 region. Residues 1047-1067 (IGCLAVFYTIAGGLFLERAYY) traverse the membrane as a helical segment. Over 1068–1082 (YAFAAHHMGITDTTR) the chain is Extracellular. Residues 1083–1103 (VGIILSRGTAASISFMFSYIL) form a helical membrane-spanning segment. Residues 1089 to 1271 (RGTAASISFM…YVGDKLVSLS (183 aa)) form the Ferric oxidoreductase domain. Residues 1104–1138 (LTMCRNLITFLRETFLNRYVPFDAAVDFHRLIAST) lie on the Cytoplasmic side of the membrane. A helical membrane pass occupies residues 1139–1159 (AIILTVLHSAGHVVNVYLFSI). Over 1160-1190 (SPLSVLSCLFPGLFHDNGSEFPQKYYWWFFQ) the chain is Extracellular. The helical transmembrane segment at 1191 to 1211 (TVPGLTGVMLLLILAIMYVFA) threads the bilayer. Residues 1212–1228 (SHHFRRCSFRGFWLTHH) lie on the Cytoplasmic side of the membrane. A helical membrane pass occupies residues 1229-1249 (LYILLYMLLIIHGSFALIQLP). R1250 is a topological domain (extracellular). A helical transmembrane segment spans residues 1251 to 1271 (FHIFFLVPALIYVGDKLVSLS). In terms of domain architecture, FAD-binding FR-type spans 1272-1378 (RKKVEISVVK…DGPFGEGHQE (107 aa)). Residues 1272–1553 (RKKVEISVVK…THFSHHYENF (282 aa)) lie on the Cytoplasmic side of the membrane.

In the N-terminal section; belongs to the peroxidase family. Interacts with TXNDC11, TPO and CYBA. Post-translationally, N-glycosylated. Specifically expressed in thyroid.

The protein resides in the apical cell membrane. The catalysed reaction is NADH + O2 + H(+) = H2O2 + NAD(+). It catalyses the reaction NADPH + O2 + H(+) = H2O2 + NADP(+). Its pathway is hormone biosynthesis; thyroid hormone biosynthesis. The NADPH oxidase activity is calcium-dependent. Peroxidase activity is inhibited by aminobenzohydrazide. In terms of biological role, generates hydrogen peroxide which is required for the activity of thyroid peroxidase/TPO and lactoperoxidase/LPO. Plays a role in thyroid hormones synthesis and lactoperoxidase-mediated antimicrobial defense at the surface of mucosa. May have its own peroxidase activity through its N-terminal peroxidase-like domain. This is Dual oxidase 1 (DUOX1) from Sus scrofa (Pig).